Here is a 367-residue protein sequence, read N- to C-terminus: Glutamate 5-kinase (367 aa).

Residue lysine 9 participates in ATP binding. Positions 49, 136, and 148 each coordinate substrate. Residues 168 to 169 (TD) and 210 to 216 (TGGMKSK) each bind ATP. The PUA domain occupies 276–350 (SGQIEVDAGA…GMQSQDIQAR (75 aa)).

The protein belongs to the glutamate 5-kinase family.

The protein resides in the cytoplasm. The catalysed reaction is L-glutamate + ATP = L-glutamyl 5-phosphate + ADP. The protein operates within amino-acid biosynthesis; L-proline biosynthesis; L-glutamate 5-semialdehyde from L-glutamate: step 1/2. Catalyzes the transfer of a phosphate group to glutamate to form L-glutamate 5-phosphate. The protein is Glutamate 5-kinase of Bacillus mycoides (strain KBAB4) (Bacillus weihenstephanensis).